The sequence spans 319 residues: GCN5-related N-acetyltransferase 5, chloroplastic (319 aa).

The N-terminal 55 residues, 1-55 (MAALSISLAFSVDSLKPTQSTKFGFSSSSHRYPLLYSCKSHRSNLRFAFPPSSVS), are a transit peptide targeting the chloroplast. In terms of domain architecture, N-acetyltransferase spans 109–297 (MWVRVMRHEE…KHLMRKKLLP (189 aa)). Residues 218–220 (MTV), 226–231 (RRGIGW), 258–260 (DEA), and tyrosine 265 each bind acetyl-CoA. Tyrosine 265 (proton donor) is an active-site residue.

Belongs to the acetyltransferase family. GNAT subfamily. As to quaternary structure, oligomer. Post-translationally, autoacetylated. Expressed in green tissues.

It localises to the plastid. It is found in the chloroplast. It catalyses the reaction an N-terminal L-alpha-aminoacyl-[protein] + acetyl-CoA = N-terminal N(alpha)-acetyl-L-alpha-aminoacyl-[protein] + CoA + H(+). It carries out the reaction L-lysyl-[protein] + acetyl-CoA = N(6)-acetyl-L-lysyl-[protein] + CoA + H(+). The enzyme catalyses N-terminal L-alanyl-[protein] + acetyl-CoA = N-terminal N(alpha)-acetyl-L-alanyl-[protein] + CoA + H(+). The catalysed reaction is N-terminal L-seryl-[protein] + acetyl-CoA = N-terminal N(alpha)-acetyl-L-seryl-[protein] + CoA + H(+). It catalyses the reaction N-terminal L-methionyl-[protein] + acetyl-CoA = N-terminal N(alpha)-acetyl-L-methionyl-[protein] + CoA + H(+). It carries out the reaction N-terminal L-valyl-[protein] + acetyl-CoA = N-terminal N(alpha)-acetyl-L-valyl-[protein] + CoA + H(+). The enzyme catalyses N-terminal L-threonyl-[protein] + acetyl-CoA = N-terminal N(alpha)-acetyl-L-threonyl-[protein] + CoA + H(+). Functionally, protein acetyltransferase with dual specificity triggering both N-alpha-acetylation (NTA), with a large spectrum of modified N-termini, including methionine, alanine, serine and to a lower extent threonine and valine as substrates, and epsilon-lysine acetylation (KA). The protein is GCN5-related N-acetyltransferase 5, chloroplastic of Arabidopsis thaliana (Mouse-ear cress).